Here is a 210-residue protein sequence, read N- to C-terminus: Pyridoxine/pyridoxamine 5'-phosphate oxidase (210 aa).

Substrate is bound by residues 7–10 (RDEY) and Lys-65. Residues 60 to 65 (RMVLLK), 75 to 76 (FT), Arg-81, Lys-82, and Gln-104 each bind FMN. Residues Tyr-122, Arg-126, and Ser-130 each coordinate substrate. FMN-binding positions include 139-140 (QS) and Trp-183. 189 to 191 (RLH) serves as a coordination point for substrate. Arg-193 serves as a coordination point for FMN.

The protein belongs to the pyridoxamine 5'-phosphate oxidase family. In terms of assembly, homodimer. Requires FMN as cofactor.

It carries out the reaction pyridoxamine 5'-phosphate + O2 + H2O = pyridoxal 5'-phosphate + H2O2 + NH4(+). The catalysed reaction is pyridoxine 5'-phosphate + O2 = pyridoxal 5'-phosphate + H2O2. The protein operates within cofactor metabolism; pyridoxal 5'-phosphate salvage; pyridoxal 5'-phosphate from pyridoxamine 5'-phosphate: step 1/1. It participates in cofactor metabolism; pyridoxal 5'-phosphate salvage; pyridoxal 5'-phosphate from pyridoxine 5'-phosphate: step 1/1. Catalyzes the oxidation of either pyridoxine 5'-phosphate (PNP) or pyridoxamine 5'-phosphate (PMP) into pyridoxal 5'-phosphate (PLP). The chain is Pyridoxine/pyridoxamine 5'-phosphate oxidase from Haemophilus influenzae (strain 86-028NP).